The primary structure comprises 574 residues: Membrane protein insertase YidC (574 aa).

Helical transmembrane passes span 6 to 26 (VFLI…WGKD), 356 to 376 (FSIM…LHSF), 380 to 400 (WGWA…PLSA), 447 to 467 (GGCL…WVLV), 489 to 509 (PYFI…KLTP), and 525 to 545 (PLVF…YWVV).

The protein belongs to the OXA1/ALB3/YidC family. Type 1 subfamily. Interacts with the Sec translocase complex via SecD. Specifically interacts with transmembrane segments of nascent integral membrane proteins during membrane integration.

It localises to the cell inner membrane. Required for the insertion and/or proper folding and/or complex formation of integral membrane proteins into the membrane. Involved in integration of membrane proteins that insert both dependently and independently of the Sec translocase complex, as well as at least some lipoproteins. Aids folding of multispanning membrane proteins. The chain is Membrane protein insertase YidC from Xanthomonas axonopodis pv. citri (strain 306).